A 70-amino-acid polypeptide reads, in one-letter code: Acyl carrier protein (70 aa).

Positions 2 to 70 constitute a Carrier domain; sequence SDIADRVKKI…ETIQTFGDAP (69 aa). Ser-37 carries the O-(pantetheine 4'-phosphoryl)serine modification.

Belongs to the acyl carrier protein (ACP) family. 4'-phosphopantetheine is transferred from CoA to a specific serine of apo-ACP by AcpS. This modification is essential for activity because fatty acids are bound in thioester linkage to the sulfhydryl of the prosthetic group.

It is found in the cytoplasm. The protein operates within lipid metabolism; fatty acid biosynthesis. In terms of biological role, carrier of the growing fatty acid chain in fatty acid biosynthesis. This chain is Acyl carrier protein, found in Cereibacter sphaeroides (Rhodobacter sphaeroides).